We begin with the raw amino-acid sequence, 544 residues long: Baeyer-Villiger monooxygenase (544 aa).

Residues Phe27, Glu47, Trp56, Asp67, Tyr73, and Val119 each contribute to the FAD site.

The protein belongs to the FAD-binding monooxygenase family. It depends on FAD as a cofactor.

Catalyzes a Baeyer-Villiger oxidation reaction, i.e. the insertion of an oxygen atom into a carbon-carbon bond adjacent to a carbonyl, which converts ketones to esters or lactones using NADPH as an electron donor. Besides cycloalkanones, can use cyclic alpha,beta-unsaturated ketones as substrates, leading to enol-lactones. Can also act on methylated cycloalkanones and methylated cycloalkenones with high enantioselectivity in some cases. This chain is Baeyer-Villiger monooxygenase, found in Parvibaculum lavamentivorans (strain DS-1 / DSM 13023 / NCIMB 13966).